The sequence spans 231 residues: L-ribulose-5-phosphate 4-epimerase AraD (231 aa).

Substrate-binding positions include 27 to 28 (GN), 44 to 45 (SG), and 74 to 75 (SS). Residues Asp76, His95, and His97 each contribute to the Zn(2+) site. Catalysis depends on Asp120, which acts as the Proton donor/acceptor. A Zn(2+)-binding site is contributed by His171. The active-site Proton donor/acceptor is Tyr229.

It belongs to the aldolase class II family. AraD/FucA subfamily. In terms of assembly, homotetramer. The cofactor is Zn(2+).

It carries out the reaction L-ribulose 5-phosphate = D-xylulose 5-phosphate. Its pathway is carbohydrate degradation; L-arabinose degradation via L-ribulose; D-xylulose 5-phosphate from L-arabinose (bacterial route): step 3/3. With respect to regulation, inhibited by glycolohydroxamate at concentration above 0.1 mM. Its function is as follows. Involved in the degradation of L-arabinose. Catalyzes the interconversion of L-ribulose 5-phosphate (LRu5P) and D-xylulose 5-phosphate (D-Xu5P) via a retroaldol/aldol mechanism (carbon-carbon bond cleavage analogous to a class II aldolase reaction). The polypeptide is L-ribulose-5-phosphate 4-epimerase AraD (Escherichia coli (strain K12)).